We begin with the raw amino-acid sequence, 120 residues long: UPF0295 protein Exig_0660 (120 aa).

2 helical membrane passes run 16–36 (AMFL…LKQF) and 41–61 (VILM…YFLI).

The protein belongs to the UPF0295 family.

Its subcellular location is the cell membrane. This chain is UPF0295 protein Exig_0660, found in Exiguobacterium sibiricum (strain DSM 17290 / CCUG 55495 / CIP 109462 / JCM 13490 / 255-15).